Here is a 650-residue protein sequence, read N- to C-terminus: Acetyl-coenzyme A synthetase (650 aa).

CoA-binding positions include 191–194 (RGGR), T311, and N335. ATP is bound by residues 387 to 389 (GEP), 411 to 416 (DTWWQT), D500, and R515. S523 is a CoA binding site. Residue R526 coordinates ATP. V537, H539, and V542 together coordinate Mg(2+). CoA is bound at residue R584. K609 carries the post-translational modification N6-acetyllysine.

It belongs to the ATP-dependent AMP-binding enzyme family. Requires Mg(2+) as cofactor. Post-translationally, acetylated. Deacetylation by the SIR2-homolog deacetylase activates the enzyme.

It carries out the reaction acetate + ATP + CoA = acetyl-CoA + AMP + diphosphate. In terms of biological role, catalyzes the conversion of acetate into acetyl-CoA (AcCoA), an essential intermediate at the junction of anabolic and catabolic pathways. AcsA undergoes a two-step reaction. In the first half reaction, AcsA combines acetate with ATP to form acetyl-adenylate (AcAMP) intermediate. In the second half reaction, it can then transfer the acetyl group from AcAMP to the sulfhydryl group of CoA, forming the product AcCoA. This chain is Acetyl-coenzyme A synthetase, found in Shewanella sp. (strain W3-18-1).